The chain runs to 276 residues: UPF0276 protein CV_3513 (276 aa).

This sequence belongs to the UPF0276 family.

The chain is UPF0276 protein CV_3513 from Chromobacterium violaceum (strain ATCC 12472 / DSM 30191 / JCM 1249 / CCUG 213 / NBRC 12614 / NCIMB 9131 / NCTC 9757 / MK).